The following is a 341-amino-acid chain: Phenylalanine--tRNA ligase alpha subunit (341 aa).

Residue E252 participates in Mg(2+) binding.

This sequence belongs to the class-II aminoacyl-tRNA synthetase family. Phe-tRNA synthetase alpha subunit type 1 subfamily. As to quaternary structure, tetramer of two alpha and two beta subunits. Mg(2+) is required as a cofactor.

Its subcellular location is the cytoplasm. The catalysed reaction is tRNA(Phe) + L-phenylalanine + ATP = L-phenylalanyl-tRNA(Phe) + AMP + diphosphate + H(+). In Malacoplasma penetrans (strain HF-2) (Mycoplasma penetrans), this protein is Phenylalanine--tRNA ligase alpha subunit.